Consider the following 316-residue polypeptide: Olfactory receptor 5P79 (316 aa).

Topologically, residues 1–28 (MGILKDGNHTAVTEFILLGLTDDPVLKV) are extracellular. N8 is a glycosylation site (N-linked (GlcNAc...) asparagine). The chain crosses the membrane as a helical span at residues 29–49 (VLFTIILCIYLVTVSGNLSTI). The Cytoplasmic portion of the chain corresponds to 50–57 (LLIRVSSQ). Residues 58–78 (LHHPMYFFLSHLASVDIGISS) traverse the membrane as a helical segment. Topologically, residues 79 to 102 (SVTPNMLVNFLLERSTISYLGCGI) are extracellular. An intrachain disulfide couples C100 to C192. Residues 103-123 (QLGSGAFFGSTESFLLAAMAY) form a helical membrane-spanning segment. Residues 124 to 136 (DHFMAICNPLLYS) are Cytoplasmic-facing. A helical transmembrane segment spans residues 137-157 (TKMSTQVCIQLLVGSYIGGFL). Over 158–199 (NASSFILSFFSFLFCGPNKVNHFFCDFTPLVELSCSDNSVLL) the chain is Extracellular. Residues 200–220 (ILDSFSAGSIIVITVLVIAIS) form a helical membrane-spanning segment. Residues 221-240 (YTYILITILKMHSTEGRHKA) lie on the Cytoplasmic side of the membrane. Residues 241-261 (FSTCTSHLTAVTVFYGTVTFI) traverse the membrane as a helical segment. At 262–274 (YVMPKSSYSTDQN) the chain is on the extracellular side. Residues 275–297 (KVLSVFYMIAIAIPMLNPLIYSL) traverse the membrane as a helical segment. The Cytoplasmic segment spans residues 298–316 (RNNEIKNALKRQLSKKTFS).

This sequence belongs to the G-protein coupled receptor 1 family.

It localises to the cell membrane. Functionally, potential odorant receptor. This is Olfactory receptor 5P79 from Mus musculus (Mouse).